We begin with the raw amino-acid sequence, 216 residues long: 4-hydroxy-tetrahydrodipicolinate reductase (216 aa).

NAD(+) contacts are provided by residues S9 to M12, G71 to T73, and A95 to F98. Residue H127 is the Proton donor/acceptor of the active site. H128 is a (S)-2,3,4,5-tetrahydrodipicolinate binding site. Residue K131 coordinates NAD(+). Catalysis depends on K131, which acts as the Proton donor. G137–T138 provides a ligand contact to (S)-2,3,4,5-tetrahydrodipicolinate.

This sequence belongs to the DapB family. As to quaternary structure, homotetramer.

Its subcellular location is the cytoplasm. It carries out the reaction (S)-2,3,4,5-tetrahydrodipicolinate + NAD(+) + H2O = (2S,4S)-4-hydroxy-2,3,4,5-tetrahydrodipicolinate + NADH + H(+). The enzyme catalyses (S)-2,3,4,5-tetrahydrodipicolinate + NADP(+) + H2O = (2S,4S)-4-hydroxy-2,3,4,5-tetrahydrodipicolinate + NADPH + H(+). The protein operates within amino-acid biosynthesis; L-lysine biosynthesis via DAP pathway; (S)-tetrahydrodipicolinate from L-aspartate: step 4/4. Is inhibited by high concentrations of NADH. Its function is as follows. Catalyzes the conversion of 4-hydroxy-tetrahydrodipicolinate (HTPA) to tetrahydrodipicolinate. Uses NADPH as a reductant with much more efficiency than NADH. The sequence is that of 4-hydroxy-tetrahydrodipicolinate reductase from Thermotoga maritima (strain ATCC 43589 / DSM 3109 / JCM 10099 / NBRC 100826 / MSB8).